A 432-amino-acid polypeptide reads, in one-letter code: G-protein coupled receptor 22 (432 aa).

Residues 1-45 (MCFSPVLEINMQSESNVTVRDDIEDIDTNMYQPLSYPLSFQVSLT) lie on the Cytoplasmic side of the membrane. The chain crosses the membrane as a helical span at residues 46–66 (GFLMLEIVLGLGSNLTVLVLY). Residues 67-85 (CMKSNLISSVSNIITMNLH) lie on the Extracellular side of the membrane. A helical membrane pass occupies residues 86–106 (VLDVIICVGCIPLTIVILLLS). Residues 107–115 (LERNTALIC) lie on the Cytoplasmic side of the membrane. The chain crosses the membrane as a helical span at residues 116 to 136 (CFHEACVSFASVSTAINVFAI). Residues 137–156 (TLDRYDISVKPANRILTMGR) lie on the Extracellular side of the membrane. A helical membrane pass occupies residues 157–177 (AVMLMTSIWIFSFFSFLIPFI). Over 178–208 (EVNFFSLQSGNAWENKTLLCVSTSEYYTELG) the chain is Cytoplasmic. A helical membrane pass occupies residues 209 to 229 (MYYHLLVQIPIFFFTVIVMLI). Residues 230–314 (TYTKILQALN…ERQKRVFKMS (85 aa)) lie on the Extracellular side of the membrane. Residues 315-335 (LLIISTFLLCWTPISVLNTTI) traverse the membrane as a helical segment. At 336-348 (LCLGPSDLLVKLR) the chain is on the cytoplasmic side. Residues 349-369 (LCFLVMAYGTTIFHPLLYAFT) traverse the membrane as a helical segment. Over 370 to 432 (RQKFQKVLKS…KCLVPQVVTD (63 aa)) the chain is Extracellular.

It belongs to the G-protein coupled receptor 1 family. In terms of tissue distribution, abundant levels detected in the brain. High expression in the heart (at protein level). No detectable expression in other peripheral tissues.

It localises to the cell membrane. Orphan G-protein coupled receptor. Seems to act through a G(i)/G(o) mediated pathway. May be involved in ciliogenesis. The chain is G-protein coupled receptor 22 from Rattus norvegicus (Rat).